The chain runs to 397 residues: Acetate kinase (397 aa).

Asn-7 provides a ligand contact to Mg(2+). Residue Lys-14 participates in ATP binding. Arg-91 lines the substrate pocket. Asp-148 acts as the Proton donor/acceptor in catalysis. Residues 208 to 212, 283 to 285, and 331 to 335 each bind ATP; these read HLGNG, DFR, and GIGEN. Residue Glu-384 participates in Mg(2+) binding.

It belongs to the acetokinase family. As to quaternary structure, homodimer. Requires Mg(2+) as cofactor. Mn(2+) serves as cofactor.

The protein localises to the cytoplasm. It carries out the reaction acetate + ATP = acetyl phosphate + ADP. It functions in the pathway metabolic intermediate biosynthesis; acetyl-CoA biosynthesis; acetyl-CoA from acetate: step 1/2. Functionally, catalyzes the formation of acetyl phosphate from acetate and ATP. Can also catalyze the reverse reaction. The chain is Acetate kinase from Treponema denticola (strain ATCC 35405 / DSM 14222 / CIP 103919 / JCM 8153 / KCTC 15104).